Here is an 825-residue protein sequence, read N- to C-terminus: Actin filament-associated protein 1-like 2 (825 aa).

Y56 is modified (phosphotyrosine). The segment at V62 to W163 is disordered. A compositionally biased stretch (polar residues) spans P80–Q94. Residue T113 is modified to Phosphothreonine. PH domains follow at residues D175–G271 and S353–G447. S408 is modified (phosphoserine). Y413 is subject to Phosphotyrosine. S484 is modified (phosphoserine). The disordered stretch occupies residues T571–R614. A compositionally biased stretch (low complexity) spans P593 to P608. Residues A657–A754 adopt a coiled-coil conformation. Residues V757–P801 are disordered. Residues L759–D769 show a composition bias toward polar residues.

As to quaternary structure, interacts with SRC. Interacts with LCK when tyrosine phosphorylated. Tyrosine phosphorylated (by SRC).

The protein localises to the cytoplasm. May play a role in a signaling cascade by enhancing the kinase activity of SRC. Contributes to SRC-regulated transcription activation. This is Actin filament-associated protein 1-like 2 (Afap1l2) from Mus musculus (Mouse).